Here is a 296-residue protein sequence, read N- to C-terminus: MANLNKRPDWIKVKAPNSTEYYNTKDLIKNLRLNTVCEEAACPNIGECWSKKHTTVMILGSVCTRACRFCNVKTGRPDLLDPYEPQRLAEAVQKLNLKHVVITSVDRDDLEDGGASHFAECISEIRKSSPNTTIEILTPDFLRKEGAAEIIANAKPDVFNHNVETVPSLYKTIRPGARYYNSLSLLHNIKKLSPEIFTKSGMMVGLGEEINEVVQVIDDLREAKVDFLTIGQYLQPTKNHAEVAKYVTPEEFKYLERLAKTKGFLMVSASPLTRSSYHADEDFQKLKENYQQKLVS.

Residues Cys-37, Cys-42, Cys-48, Cys-63, Cys-67, Cys-70, and Ser-276 each coordinate [4Fe-4S] cluster. The Radical SAM core domain occupies Trp-49–Leu-265.

It belongs to the radical SAM superfamily. Lipoyl synthase family. [4Fe-4S] cluster is required as a cofactor.

It is found in the cytoplasm. The enzyme catalyses [[Fe-S] cluster scaffold protein carrying a second [4Fe-4S](2+) cluster] + N(6)-octanoyl-L-lysyl-[protein] + 2 oxidized [2Fe-2S]-[ferredoxin] + 2 S-adenosyl-L-methionine + 4 H(+) = [[Fe-S] cluster scaffold protein] + N(6)-[(R)-dihydrolipoyl]-L-lysyl-[protein] + 4 Fe(3+) + 2 hydrogen sulfide + 2 5'-deoxyadenosine + 2 L-methionine + 2 reduced [2Fe-2S]-[ferredoxin]. It participates in protein modification; protein lipoylation via endogenous pathway; protein N(6)-(lipoyl)lysine from octanoyl-[acyl-carrier-protein]: step 2/2. Catalyzes the radical-mediated insertion of two sulfur atoms into the C-6 and C-8 positions of the octanoyl moiety bound to the lipoyl domains of lipoate-dependent enzymes, thereby converting the octanoylated domains into lipoylated derivatives. This is Lipoyl synthase from Rickettsia rickettsii (strain Iowa).